A 494-amino-acid chain; its full sequence is 3-octaprenyl-4-hydroxybenzoate carboxy-lyase (494 aa).

Asn172 contacts Mn(2+). Residues 175–177 (IYR), 189–191 (RWL), and 194–195 (RG) each bind prenylated FMN. Residue Glu238 coordinates Mn(2+). Asp294 serves as the catalytic Proton donor.

Belongs to the UbiD family. Homohexamer. It depends on prenylated FMN as a cofactor. Requires Mn(2+) as cofactor.

The protein resides in the cell membrane. The catalysed reaction is a 4-hydroxy-3-(all-trans-polyprenyl)benzoate + H(+) = a 2-(all-trans-polyprenyl)phenol + CO2. Its pathway is cofactor biosynthesis; ubiquinone biosynthesis. Catalyzes the decarboxylation of 3-octaprenyl-4-hydroxy benzoate to 2-octaprenylphenol, an intermediate step in ubiquinone biosynthesis. This Janthinobacterium sp. (strain Marseille) (Minibacterium massiliensis) protein is 3-octaprenyl-4-hydroxybenzoate carboxy-lyase.